The primary structure comprises 256 residues: 5-keto-4-deoxy-D-glucarate aldolase (256 aa).

The active-site Proton acceptor is the His50. A substrate-binding site is contributed by Gln151. Glu153 contributes to the Mg(2+) binding site. Substrate contacts are provided by Ser178 and Asp179. Position 179 (Asp179) interacts with Mg(2+).

The protein belongs to the HpcH/HpaI aldolase family. KDGluc aldolase subfamily. Homohexamer; trimer of dimers. Mg(2+) is required as a cofactor.

The enzyme catalyses 5-dehydro-4-deoxy-D-glucarate = 2-hydroxy-3-oxopropanoate + pyruvate. The catalysed reaction is 2-dehydro-3-deoxy-D-glucarate = 2-hydroxy-3-oxopropanoate + pyruvate. It participates in carbohydrate acid metabolism; galactarate degradation; D-glycerate from galactarate: step 2/3. In terms of biological role, catalyzes the reversible retro-aldol cleavage of both 5-keto-4-deoxy-D-glucarate and 2-keto-3-deoxy-D-glucarate to pyruvate and tartronic semialdehyde. This is 5-keto-4-deoxy-D-glucarate aldolase from Escherichia coli O6:H1 (strain CFT073 / ATCC 700928 / UPEC).